A 190-amino-acid chain; its full sequence is Translation machinery-associated protein 22 (190 aa).

The tract at residues 63 to 83 (LNVSGTKDSNAEEQPAKLTKE) is disordered. Residues 99–170 (VLIKTIERTK…DIFDFILEKF (72 aa)) form the SUI1 domain.

Belongs to the DENR family. Interacts with the 40S ribosomal subunit.

The protein localises to the cytoplasm. The polypeptide is Translation machinery-associated protein 22 (tma22) (Schizosaccharomyces pombe (strain 972 / ATCC 24843) (Fission yeast)).